A 367-amino-acid polypeptide reads, in one-letter code: Probable dual-specificity RNA methyltransferase RlmN (367 aa).

Glutamate 92 (proton acceptor) is an active-site residue. Residues 98–326 (QEYGLSVCVT…YDTLKKNGIN (229 aa)) form the Radical SAM core domain. A disulfide bond links cysteine 105 and cysteine 341. [4Fe-4S] cluster-binding residues include cysteine 112, cysteine 116, and cysteine 119. Residues 164–165 (GE), serine 196, 219–221 (SLH), and asparagine 297 each bind S-adenosyl-L-methionine. The S-methylcysteine intermediate role is filled by cysteine 341.

It belongs to the radical SAM superfamily. RlmN family. [4Fe-4S] cluster serves as cofactor.

It is found in the cytoplasm. It catalyses the reaction adenosine(2503) in 23S rRNA + 2 reduced [2Fe-2S]-[ferredoxin] + 2 S-adenosyl-L-methionine = 2-methyladenosine(2503) in 23S rRNA + 5'-deoxyadenosine + L-methionine + 2 oxidized [2Fe-2S]-[ferredoxin] + S-adenosyl-L-homocysteine. The catalysed reaction is adenosine(37) in tRNA + 2 reduced [2Fe-2S]-[ferredoxin] + 2 S-adenosyl-L-methionine = 2-methyladenosine(37) in tRNA + 5'-deoxyadenosine + L-methionine + 2 oxidized [2Fe-2S]-[ferredoxin] + S-adenosyl-L-homocysteine. Its function is as follows. Specifically methylates position 2 of adenine 2503 in 23S rRNA and position 2 of adenine 37 in tRNAs. The polypeptide is Probable dual-specificity RNA methyltransferase RlmN (Listeria monocytogenes serovar 1/2a (strain ATCC BAA-679 / EGD-e)).